The sequence spans 209 residues: Thiamine-phosphate synthase (209 aa).

Residues 36–40 (QYRDK) and Asn-68 contribute to the 4-amino-2-methyl-5-(diphosphooxymethyl)pyrimidine site. Residues Asp-69 and Asp-87 each contribute to the Mg(2+) site. Residue Thr-106 coordinates 4-amino-2-methyl-5-(diphosphooxymethyl)pyrimidine. Residue 133–135 (SST) participates in 2-[(2R,5Z)-2-carboxy-4-methylthiazol-5(2H)-ylidene]ethyl phosphate binding. Lys-136 lines the 4-amino-2-methyl-5-(diphosphooxymethyl)pyrimidine pocket. Gly-163 is a 2-[(2R,5Z)-2-carboxy-4-methylthiazol-5(2H)-ylidene]ethyl phosphate binding site.

Belongs to the thiamine-phosphate synthase family. Requires Mg(2+) as cofactor.

The enzyme catalyses 2-[(2R,5Z)-2-carboxy-4-methylthiazol-5(2H)-ylidene]ethyl phosphate + 4-amino-2-methyl-5-(diphosphooxymethyl)pyrimidine + 2 H(+) = thiamine phosphate + CO2 + diphosphate. The catalysed reaction is 2-(2-carboxy-4-methylthiazol-5-yl)ethyl phosphate + 4-amino-2-methyl-5-(diphosphooxymethyl)pyrimidine + 2 H(+) = thiamine phosphate + CO2 + diphosphate. It catalyses the reaction 4-methyl-5-(2-phosphooxyethyl)-thiazole + 4-amino-2-methyl-5-(diphosphooxymethyl)pyrimidine + H(+) = thiamine phosphate + diphosphate. It functions in the pathway cofactor biosynthesis; thiamine diphosphate biosynthesis; thiamine phosphate from 4-amino-2-methyl-5-diphosphomethylpyrimidine and 4-methyl-5-(2-phosphoethyl)-thiazole: step 1/1. Condenses 4-methyl-5-(beta-hydroxyethyl)thiazole monophosphate (THZ-P) and 2-methyl-4-amino-5-hydroxymethyl pyrimidine pyrophosphate (HMP-PP) to form thiamine monophosphate (TMP). The sequence is that of Thiamine-phosphate synthase from Azotobacter vinelandii (strain DJ / ATCC BAA-1303).